A 150-amino-acid polypeptide reads, in one-letter code: Large ribosomal subunit protein bL9 (150 aa).

Belongs to the bacterial ribosomal protein bL9 family.

Its function is as follows. Binds to the 23S rRNA. The protein is Large ribosomal subunit protein bL9 of Shewanella baltica (strain OS155 / ATCC BAA-1091).